The primary structure comprises 368 residues: MMVPAELFARVEFPDQQVLADAREYQNTLVKPAGSLSRLEDVGCFIAACQGQVPPRRLDRPRIVVFAGDHGVAARGVSAYPASVSLQMAQSMLDGGAAINVLARAAGASVRVADISLDHEATGPERVRRSCGSIDIEDAMTGEEVLQALQIGIRIADQEIDSGADILIPGDLGIGNTTPAAALIGTFTLAEPVVVVGRGTGIDDEGWKRKVTAVRDAMFRVRTLRQDPITVARMISSPDLTAMAAFIAQAAVRRTPVILDGAVVTAAALLANKLAPGARRWFIAGHRSPEPAHPIALDALGLTPLVDLGMRLGEGSGAAAALPLVKTAVDLMIDMSTMNDAGVDRADGADNSADSGASAGTVASDPTV.

Glu314 serves as the catalytic Proton acceptor. The segment at 344–368 is disordered; that stretch reads DRADGADNSADSGASAGTVASDPTV. A compositionally biased stretch (low complexity) spans 349–360; the sequence is ADNSADSGASAG.

This sequence belongs to the CobT family.

It catalyses the reaction 5,6-dimethylbenzimidazole + nicotinate beta-D-ribonucleotide = alpha-ribazole 5'-phosphate + nicotinate + H(+). The protein operates within nucleoside biosynthesis; alpha-ribazole biosynthesis; alpha-ribazole from 5,6-dimethylbenzimidazole: step 1/2. Its function is as follows. Catalyzes the synthesis of alpha-ribazole-5'-phosphate from nicotinate mononucleotide (NAMN) and 5,6-dimethylbenzimidazole (DMB). This Corynebacterium efficiens (strain DSM 44549 / YS-314 / AJ 12310 / JCM 11189 / NBRC 100395) protein is Nicotinate-nucleotide--dimethylbenzimidazole phosphoribosyltransferase.